A 217-amino-acid chain; its full sequence is Regulator of G-protein signaling 19 (217 aa).

The tract at residues 1–29 is disordered; the sequence is MPTPHEAEKQITGPEEADRPPSMSSHDTA. A phosphoserine mark is found at S24 and S97. Positions 90–206 constitute an RGS domain; sequence SFDKLMHSPA…LSSPTYRALL (117 aa). Residue S151 is modified to Phosphoserine; by MAPK1 and MAPK3. An interaction with GIPC region spans residues 207 to 217; that stretch reads LQGPSQSSSEA.

As to quaternary structure, interacts with GIPC PDZ domain. Interacts with GNAO1. Fatty acylated. Heavily palmitoylated in the cysteine string motif. In terms of processing, phosphorylated, mainly on serine residues. Highest expression in lung. Placenta, liver and heart also express high levels of GAIP.

It localises to the membrane. Functionally, inhibits signal transduction by increasing the GTPase activity of G protein alpha subunits thereby driving them into their inactive GDP-bound form. Binds to G-alpha subfamily 1 members, with the order G(i)a3 &gt; G(i)a1 &gt; G(o)a &gt;&gt; G(z)a/G(i)a2. Activity on G(z)-alpha is inhibited by phosphorylation and palmitoylation of the G-protein. This chain is Regulator of G-protein signaling 19 (RGS19), found in Homo sapiens (Human).